The following is a 397-amino-acid chain: Probable sugar efflux transporter (397 aa).

A run of 12 helical transmembrane segments spans residues 15–35 (VVTLAIAAFIFNTTEFVPVGL), 51–71 (GIMLTIYAWVVALMSLPFMLL), 81–101 (LICLFVLFIASHILSFMAWSF), 103–123 (VLVISRIGVAFAHAIFWSITA), 136–156 (AQALSLLATGTALAMVLGLPV), 170–190 (FLAIGVGAFLTLLCLIKLLPL), 209–229 (PALMSIYLLTVVVVTAHYTAY), 246–266 (FATVLLLILGGAGIIGSVIFG), 273–293 (ASVLVSVAIALLMACLLLLMP), 301–321 (LAILSIFWGIAIMMIGLGMQV), 333–353 (VAMSLFSGIFNIGIGAGALVG), and 364–384 (DIGYVGAIPAFLALVWSVIIF).

This sequence belongs to the major facilitator superfamily. SotB (TC 2.A.1.2) family.

Its subcellular location is the cell inner membrane. Its function is as follows. Involved in the efflux of sugars. The physiological role may be the reduction of the intracellular concentration of toxic sugars or sugar metabolites. This Escherichia fergusonii (strain ATCC 35469 / DSM 13698 / CCUG 18766 / IAM 14443 / JCM 21226 / LMG 7866 / NBRC 102419 / NCTC 12128 / CDC 0568-73) protein is Probable sugar efflux transporter.